A 268-amino-acid chain; its full sequence is Secreted RxLR effector protein 6 (268 aa).

An N-terminal signal peptide occupies residues 1-19 (MRGAFYIAIALLVVRSRTA). The RxLR-dEER motif lies at 48–63 (RYLRDGLAHSAANEER). The segment at 90-123 (IGGHSHTPKSKRKVNLSPAKSQSGIRKKSTSINK) is disordered. Polar residues predominate over residues 107–123 (PAKSQSGIRKKSTSINK).

Belongs to the RxLR effector family.

The protein localises to the secreted. Its subcellular location is the host nucleus. The protein resides in the host cytoplasm. In terms of biological role, secreted effector that completely suppresses the host cell death induced by cell death-inducing proteins. This Plasmopara viticola (Downy mildew of grapevine) protein is Secreted RxLR effector protein 6.